We begin with the raw amino-acid sequence, 72 residues long: UPF0337 protein bsl2407 (72 aa).

A disordered region spans residues 1 to 55 (MGSTTDKIKGNANEAIGKAKQGIGEATGSDRLKGEGVVQEVKGKGQQAMGDAKDA). A compositionally biased stretch (low complexity) spans 35–47 (EGVVQEVKGKGQQ).

It belongs to the UPF0337 (CsbD) family.

In Bradyrhizobium diazoefficiens (strain JCM 10833 / BCRC 13528 / IAM 13628 / NBRC 14792 / USDA 110), this protein is UPF0337 protein bsl2407.